A 150-amino-acid polypeptide reads, in one-letter code: Large ribosomal subunit protein bL9 (150 aa).

This sequence belongs to the bacterial ribosomal protein bL9 family.

Binds to the 23S rRNA. This Shewanella frigidimarina (strain NCIMB 400) protein is Large ribosomal subunit protein bL9.